The following is a 588-amino-acid chain: Beta-(1--&gt;2)glucan export ATP-binding/permease protein NdvA (588 aa).

The ABC transmembrane type-1 domain occupies Val21–Glu301. Helical transmembrane passes span Ala22–Phe42, Pro57–Ala77, Thr136–Leu156, Leu158–Gly178, Thr248–Gly268, and Val272–Met292. An ABC transporter domain is found at Val335–Thr569. Gly368 to Thr375 is an ATP binding site.

It belongs to the ABC transporter superfamily. Beta-(1--&gt;2)glucan exporter (TC 3.A.1.108.1) family. As to quaternary structure, homodimer.

The protein resides in the cell inner membrane. The catalysed reaction is [(1-&gt;2)-beta-D-glucosyl](n)(in) + ATP + H2O = [(1-&gt;2)-beta-D-glucosyl](n)(out) + ADP + phosphate + H(+). Its function is as follows. Involved in beta-(1--&gt;2)glucan export which is required for crown gall tumor formation. Transmembrane domains (TMD) form a pore in the inner membrane and the ATP-binding domain (NBD) is responsible for energy generation. This Rhizobium radiobacter (Agrobacterium tumefaciens) protein is Beta-(1--&gt;2)glucan export ATP-binding/permease protein NdvA.